Consider the following 144-residue polypeptide: MNTTEEQQQIAHFLSKQHVLTLCAGNGMDMWCANCFYVFDAGQMALWLMTETHTRHGELMLQNSRVVGTIAPKPKTIALIRGVQYRAEAVMLSGDEERLARARYCKRFPIAKVMKAPVWQLSLQEVKMTDNTLGFGTKLHWTRT.

Belongs to the UPF0306 family.

This is UPF0306 protein Spro_0510 from Serratia proteamaculans (strain 568).